We begin with the raw amino-acid sequence, 191 residues long: Cathelicidin-related antimicrobial peptide Na_CRAMP (191 aa).

Residues 1-22 (MEGFFWKTLLVVGALTISGTSS) form the signal peptide. Positions 23–161 (FPHKPLTYEE…DQPKRVKRFK (139 aa)) are excised as a propeptide. 2 disulfide bridges follow: Cys-81-Cys-92 and Cys-103-Cys-120. Positions 126–154 (EEEQKQEEGNEEEKEVEKEEKEEDQKDQP) are disordered. Residues 140-154 (EVEKEEKEEDQKDQP) show a composition bias toward basic and acidic residues.

The protein belongs to the cathelicidin family. Expressed by the venom gland.

It localises to the secreted. It is found in the target cell membrane. Functionally, potent antimicrobial peptide against most of Gram-negative bacteria, some Gram-positive bacteria (Bacillus) and some fungi. Adopts an amphipathic alpha helical conformation, that may allow to partition into the target membrane. No hemolytic and cytotoxic activities have been observed on mammalian cells. The chain is Cathelicidin-related antimicrobial peptide Na_CRAMP from Naja atra (Chinese cobra).